Here is a 3420-residue protein sequence, read N- to C-terminus: MPNLANQDFTQFKREQQTAPAWFRILRGGRMTKWKGKVASYAPHVAPAIGWAFSRTLQLSLISLVMAGTAAASDRYWDSNGTAVGRGGSGAWNTSNAFWSPSGDGVSGPYSAWNNAAFDTAIFGGTAGTVTLGSPITVGAMTFETTGYILSGNTLTLGTATPTITTSSGTTTINSVLAGTNGLTKAGDGILSLTGANTFSGNIIVTGGTLSVNSSAALGAAANEISLANGAGLNSSGSLAGRSVTLTGGQAAIGGAGVGDAHFTGAGGLRASSSVTLSDDSNDYTGQTSLSSGGTLFFSSIGNLGEVSALGAPVDEAAGTISLVVGSSASASATYTGSGASSNRNWQLSSRFYANSTISNRGSGTLTLTGNIFNNHTNSSLSARNINFDAGTADIELLGTISSNNNGVGVVFGGTAGRTIKVSGDNTFGGAAIIQNITVQVGSLKNTGDPSALGTGTGAAGAISINSGILSYLGAGDSSDRNFTAQNNAILANDGTGALTLSGDVALTGTLTLGGSFAGTNTLAGTVSGTGNLRVDGAGSWILSSANTFTGDVGVNSGTLVVGNMQALGTTPKAATVNGGTLDLGAFDTTLSSLSGTGGNVNLGGATLTVKGSTSTDFAGSMTGSGNLLKQGTSTLTLTGASSFTGDTTINGGAISLNFKNATALTDNILSTSSTLNLAGGTFNVIGMDNAANSQTVDGLNVTTGNNKITTTSGSGGTLTLNLGAINRTGGFIDFGINADTTITTTSATLGGWATVNSTDYAKVDGGVIKALDESDYANKDDAGTWANGDIVSDAGGAANTPYFGTVGTGLQLGGLKYTAAANSTVTIAAGQTLGVNGTIIVANTVGNTNQTINGGSLTGITGGGVLGVLQTGTGTFTIQSTITDNGGAIGFTKAGAGSVTLTGQNTYSGVTTLSGGILTVTQMANAGMASGIGQSTADPANLMLESGTFRYTGGSVTTDRGFTLVNGGPARVIEVTGSGSNLAFSGLVTSPDDAGFEKKGAGTLTFLNGSNDYIGATTVSGGTLAVSTLADGGQVSSLGKSGSDATNLILAGGALNYLGSTTSSDRSFTLGAGNGSIGVANAGTTLSMSGTAVGTGGLTKLGDGTLILSGTNTYTGNTAVNAGVLRAGSAQAFGPSGLMTVGNGASLELGGYDITVSGLLGAGTVDLGGNTLTSSGSAANSFTGKITGTGGFTRTGGSTQTLSGCNSDYTGKTTIASNGTLSVDCLKNGGQASSIGASSNAPDNLVLNNGTLSYTGNTVTTDRGFTIQGGTGAISVTDAATTLTFSGQVVGTGALQKRGTGTLVLMNSNSYRGGTSVDAGTLRAGSSGAFGGGSMSLSNAAGAILDLDGFDTSVTSLSGGGALGGNVALGGATLTISSGNSNGTSYTGAITGIGNFVKNGNGTQRLTGCASSYSGSTTINGGVLEDSCLADGGSVSSIGMSSADADNLVINGGVLRYTGSGDSTDRQFTLGASGGNSIESEGTGAILFTSNAAVTFAAANTAQTLTLAGTNTDDNELGAQLTNNGSGITSLTKTDTGTWFLTNSDSTYTGVTKINGGVLSVDKLANGGLASSIGASSSAASNLIIGNDSTLRYLGTGDTTDRLFTLASGLTYIESSGSGAIVFTDTGQVALADNNQARTIALGGKNTGDNTLAGSIGDAGTGKTTLAKNDDGTWVLTGNNTFTGPTNINKGLLKIGNGGTTGSLTSDIVVTDGGLIFNRSDTLNYGGLISGAGFVTQSGSGTTILTGANSYTGATSVSAGTLLVNGDQSAATGQTSVANGSILGGSGIIGGNVVVTDGALAPGSNGAGTLTINGSLALSAGSILSMQLGQAGVAGGALNDLIEVKGNLTLDGTLDVAETAGGSYGPGIYRLINYTGSLTDNGLDIGMLPNGAGAIQTAVAGQVNLLAGGTNFNFWDGDVGPKFNSAVDGGNGTWQNSSGNNNWTDATGNINASYSDGAFAIFTGTAGTVTIDNSLGQVKAEGMQFAIDSYAVTGDKLELTGPQSTIRVGDGTTAGAAYIATINSVLTGNTQLEKTDAGTLVLTGANSYTGGTAINGGTIRISSDDNLGVASSDISFDGGALNTTANIATDRAIILTGAGTLLTDASTTLSLSGPISGTGALTKSGTGTLLLSGTAVHTGGTTITAGTLQIGNGGTDGSIDGNIVNNGALVFDRAGTLAYTGSISGTGTLTKNGSSTLTMTGTSTYTGETTVSAGTLALQAGGQIKGTASLTVDGGAEVLIDGSGSQFATGAGASVVGTGTVTVRDGGTASFDSLTTSNATGTNSTITVAGSGSQMTQTGIATFGLAGTATVDILDGGTMISSGASVFVGGQLPMDATGQVTISGAGSQWTIANALYARRGSITVDDGGVVTAGSAVIGYADTGINNPETDLVVTGAGSRFETTGELAITNSAANAARGSITIADGGVVKVGGGALAMGPGNAVLNIGAAAGGSPAHAGTLDAGTVTMAVGSNQINFNHDDASTTFSATISGAGSVSQNGPGATLLTGNNSYAGLTTVTAGSLYIDGDQSMATGLTTVNPGGTLGGTGTIGGDVTVASGGAINPGSFGMAPGTLNINGDLTLASGSTQSFSFGQANIPGGPLNDLINVGGDLVLAGTLQVDTSAGGTMDPGIYRVFNYTGTLSQNAWTVNLPSPDFYVQTSVAQQINLVNTAGLALRFWDGADPQNKNNGKIEGGNGIWQAFGSAPDNGNDNWTETGNINAPFQDATFAVFTGEKGTVTVDDSKGAINVSGIQFVTDGYIVNGDAINLVGASGSTIRVGDGTTGGTDTVASIDAEITGASQLIKADMGTLILTGDNSYTGGTKITGGTLQVAKDSALGARTGELILDGGTLNTTADMTIDRSVTVDQAGTLDIDTGTTLKIDGVLSGAGAFVKTGAGRLELAGDDHTYNGDASIASGTLALTGALGGTMNVGIDGRLEATGRVGATTNSGVIALDQEGFGSLTVNGNYTGKDGRLEIATVLGDDTSLTNRLVIDGDMAGTTQVSVTNRGGLGAQTVEGIKIIQVGGASNGMFLLAGDYMFNGEQAVVAGAYGYRLYKGGVSTPADGNWYLRSALLNPETPTNPTDPETPLYQPGVPLYESYAGSLQQLNKLGTLQQRVGNRVWAKHPVPAQSDENGAGPSGNNGIWARIEAAHAEFDPKQSTSRASYDADIWKFQTGIDGMFAETASGKFIGGVYVQYETVSSSVSSPFGNGSIESSGYGAGATLTWYGESDFYIDGVAQINWFDSDLNSATLGRQLVDGNRAVGYSLSVETGQKIEIGEGWSLTPQAQLAYSAIRFDDFKDAFDTSVSPENDHDLTGRLGLAINRDAEWLDAQGRRVAMHIYGIGNLYYGFAGASKVDVSSVRFVSGNERLRGGIGLGGTYDWADSKYSLYGETRFDTSLQNFGDSNVIAGSVGLRVRW.

The N-terminal stretch at 1–72 (MPNLANQDFT…SLVMAGTAAA (72 aa)) is a signal peptide. The Autotransporter domain maps to 3138-3420 (GPSGNNGIWA…AGSVGLRVRW (283 aa)).

It localises to the cell surface. It is found in the cell outer membrane. Functionally, fibronectin-binding protein, which is involved in adhesion to host cells and in the infective process. Mediates the binding of B.suis to the extracellular matrix and to non-phagocytic cells via cell-associated fibronectin. In Brucella suis biovar 1 (strain 1330), this protein is Adhesin BmaC autotransporter.